Here is a 281-residue protein sequence, read N- to C-terminus: Rhomboid protease AarA (281 aa).

7 helical membrane-spanning segments follow: residues 16–36 (FSLG…AVYF), 76–96 (MLHS…VIGI), 105–125 (FKLL…SAYW), 145–165 (IGVG…IYLI), 185–205 (QLYN…QSGV), 208–228 (AAHI…ILVP), and 233–253 (VANL…IYLY). Serine 150 acts as the Nucleophile in catalysis. Histidine 210 acts as the Charge relay system in catalysis.

It belongs to the peptidase S54 family.

The protein resides in the cell membrane. It catalyses the reaction Cleaves type-1 transmembrane domains using a catalytic dyad composed of serine and histidine that are contributed by different transmembrane domains.. In terms of biological role, rhomboid serine protease that catalyzes intramembrane proteolysis. Mediates quorum-sensing and the subsequent regulation of target genes via activation of the Tat protein export system. Catalyzes the proteolytic activation of TatA by removal of its N-terminal extension. The chain is Rhomboid protease AarA (aarA) from Providencia stuartii.